Here is a 495-residue protein sequence, read N- to C-terminus: UDP-N-acetylmuramoyl-L-alanyl-D-glutamate--2,6-diaminopimelate ligase (495 aa).

UDP-N-acetyl-alpha-D-muramoyl-L-alanyl-D-glutamate-binding positions include Leu27, Ser29, and 44–46 (HQA). An ATP-binding site is contributed by 116–122 (GTNGKTT). UDP-N-acetyl-alpha-D-muramoyl-L-alanyl-D-glutamate-binding positions include Asn157, 158–159 (TT), Ser185, Gln191, and Arg193. Lys225 carries the post-translational modification N6-carboxylysine. Residues Arg390, 414-417 (DNPR), Gly465, and Glu469 contribute to the meso-2,6-diaminopimelate site. The Meso-diaminopimelate recognition motif motif lies at 414–417 (DNPR).

The protein belongs to the MurCDEF family. MurE subfamily. Requires Mg(2+) as cofactor. Carboxylation is probably crucial for Mg(2+) binding and, consequently, for the gamma-phosphate positioning of ATP.

Its subcellular location is the cytoplasm. The catalysed reaction is UDP-N-acetyl-alpha-D-muramoyl-L-alanyl-D-glutamate + meso-2,6-diaminopimelate + ATP = UDP-N-acetyl-alpha-D-muramoyl-L-alanyl-gamma-D-glutamyl-meso-2,6-diaminopimelate + ADP + phosphate + H(+). It functions in the pathway cell wall biogenesis; peptidoglycan biosynthesis. Functionally, catalyzes the addition of meso-diaminopimelic acid to the nucleotide precursor UDP-N-acetylmuramoyl-L-alanyl-D-glutamate (UMAG) in the biosynthesis of bacterial cell-wall peptidoglycan. The polypeptide is UDP-N-acetylmuramoyl-L-alanyl-D-glutamate--2,6-diaminopimelate ligase (Salmonella paratyphi A (strain ATCC 9150 / SARB42)).